We begin with the raw amino-acid sequence, 496 residues long: Rhamnulokinase (496 aa).

13–17 (ASSGR) serves as a coordination point for ATP. Substrate-binding positions include glycine 83 and 236–238 (HDT). Aspartate 237 functions as the Proton acceptor in the catalytic mechanism. Threonine 259 contacts ATP. Residue asparagine 296 coordinates substrate. Glutamine 304 contacts ATP. A disulfide bond links cysteine 353 and cysteine 370. An ATP-binding site is contributed by glycine 402. Cysteines 413 and 417 form a disulfide.

It belongs to the rhamnulokinase family. Mg(2+) is required as a cofactor.

It carries out the reaction L-rhamnulose + ATP = L-rhamnulose 1-phosphate + ADP + H(+). Its pathway is carbohydrate degradation; L-rhamnose degradation; glycerone phosphate from L-rhamnose: step 2/3. Functionally, involved in the catabolism of L-rhamnose (6-deoxy-L-mannose). Catalyzes the transfer of the gamma-phosphate group from ATP to the 1-hydroxyl group of L-rhamnulose to yield L-rhamnulose 1-phosphate. The polypeptide is Rhamnulokinase (Pectobacterium carotovorum subsp. carotovorum (strain PC1)).